A 252-amino-acid chain; its full sequence is Imidazole glycerol phosphate synthase subunit HisF (252 aa).

Active-site residues include Asp11 and Asp130.

Belongs to the HisA/HisF family. In terms of assembly, heterodimer of HisH and HisF.

It localises to the cytoplasm. It catalyses the reaction 5-[(5-phospho-1-deoxy-D-ribulos-1-ylimino)methylamino]-1-(5-phospho-beta-D-ribosyl)imidazole-4-carboxamide + L-glutamine = D-erythro-1-(imidazol-4-yl)glycerol 3-phosphate + 5-amino-1-(5-phospho-beta-D-ribosyl)imidazole-4-carboxamide + L-glutamate + H(+). Its pathway is amino-acid biosynthesis; L-histidine biosynthesis; L-histidine from 5-phospho-alpha-D-ribose 1-diphosphate: step 5/9. Its function is as follows. IGPS catalyzes the conversion of PRFAR and glutamine to IGP, AICAR and glutamate. The HisF subunit catalyzes the cyclization activity that produces IGP and AICAR from PRFAR using the ammonia provided by the HisH subunit. This chain is Imidazole glycerol phosphate synthase subunit HisF, found in Staphylococcus aureus (strain MRSA252).